The primary structure comprises 427 residues: Septin-6 (427 aa).

Residue alanine 2 is modified to N-acetylalanine. Residue serine 27 is modified to Phosphoserine. The Septin-type G domain maps to 39–305 (QGFCFNILCV…ELYRRCKLEE (267 aa)). The G1 motif stretch occupies residues 49 to 56 (GETGLGKS). GTP-binding positions include 49 to 56 (GETGLGKS), glycine 104, 185 to 193 (KSDAISKSE), glycine 239, and arginine 254. The segment at 101–104 (STVG) is G3 motif. Positions 184–187 (AKSD) are G4 motif. Residues 321-416 (QETYEAKRNE…QSQGSQAGGS (96 aa)) adopt a coiled-coil conformation. An N6-acetyllysine modification is found at lysine 367. A disordered region spans residues 405 to 427 (LLQSQGSQAGGSQTLKRDKEKKN). Positions 407 to 417 (QSQGSQAGGSQ) are enriched in low complexity. Phosphoserine is present on serine 416. Threonine 418 bears the Phosphothreonine mark.

The protein belongs to the TRAFAC class TrmE-Era-EngA-EngB-Septin-like GTPase superfamily. Septin GTPase family. Septins polymerize into heterooligomeric protein complexes that form filaments, and associate with cellular membranes, actin filaments and microtubules. GTPase activity is required for filament formation. Filaments are assembled from asymmetrical heterotrimers, composed of SEPTIN2, SEPTIN6 and SEPTIN7 that associate head-to-head to form a hexameric unit. Within the trimer, directly interacts with SEPTIN2 and SEPTIN7. Also interacts with SEPTIN9 and SEPTIN12. Interaction with SEPTIN12 alters filament structure. Component of a septin core octameric complex consisting of SEPTIN12, SEPTIN7, SEPTIN6 and SEPTIN2 or SEPTIN4 in the order 12-7-6-2-2-6-7-12 or 12-7-6-4-4-6-7-12 and located in the sperm annulus. Interacts with SOCS7. Interacts with HNRNPA1.

The protein resides in the cytoplasm. It is found in the cytoskeleton. Its subcellular location is the spindle. The protein localises to the chromosome. It localises to the centromere. The protein resides in the kinetochore. It is found in the cleavage furrow. Its subcellular location is the midbody. The protein localises to the cell projection. It localises to the cilium. The protein resides in the flagellum. Its function is as follows. Filament-forming cytoskeletal GTPase. Required for normal organization of the actin cytoskeleton. Involved in cytokinesis. Forms a filamentous structure with SEPTIN12, SEPTIN6, SEPTIN2 and probably SEPTIN4 at the sperm annulus which is required for the structural integrity and motility of the sperm tail during postmeiotic differentiation. The polypeptide is Septin-6 (Bos taurus (Bovine)).